A 204-amino-acid chain; its full sequence is Threonylcarbamoyl-AMP synthase (204 aa).

In terms of domain architecture, YrdC-like spans 10 to 204 (ADELDLVANY…KDLLAGHILR (195 aa)).

The protein belongs to the SUA5 family. TsaC subfamily.

The protein localises to the cytoplasm. The enzyme catalyses L-threonine + hydrogencarbonate + ATP = L-threonylcarbamoyladenylate + diphosphate + H2O. Required for the formation of a threonylcarbamoyl group on adenosine at position 37 (t(6)A37) in tRNAs that read codons beginning with adenine. Catalyzes the conversion of L-threonine, HCO(3)(-)/CO(2) and ATP to give threonylcarbamoyl-AMP (TC-AMP) as the acyladenylate intermediate, with the release of diphosphate. The protein is Threonylcarbamoyl-AMP synthase of Moraxella catarrhalis (strain BBH18).